A 388-amino-acid polypeptide reads, in one-letter code: Chorismate synthase (388 aa).

Positions 40 and 46 each coordinate NADP(+). FMN contacts are provided by residues 131–133 (RSS), 252–253 (NA), Gly296, 311–315 (KPIPT), and Arg337.

This sequence belongs to the chorismate synthase family. In terms of assembly, homotetramer. It depends on FMNH2 as a cofactor.

It carries out the reaction 5-O-(1-carboxyvinyl)-3-phosphoshikimate = chorismate + phosphate. It participates in metabolic intermediate biosynthesis; chorismate biosynthesis; chorismate from D-erythrose 4-phosphate and phosphoenolpyruvate: step 7/7. Functionally, catalyzes the anti-1,4-elimination of the C-3 phosphate and the C-6 proR hydrogen from 5-enolpyruvylshikimate-3-phosphate (EPSP) to yield chorismate, which is the branch point compound that serves as the starting substrate for the three terminal pathways of aromatic amino acid biosynthesis. This reaction introduces a second double bond into the aromatic ring system. This Limosilactobacillus fermentum (strain NBRC 3956 / LMG 18251) (Lactobacillus fermentum) protein is Chorismate synthase.